The chain runs to 139 residues: Large-conductance mechanosensitive channel (139 aa).

3 helical membrane passes run 10 to 30 (FAVKGNVVDLAVAVIVGAAFG), 40 to 60 (VIMPVVGKIFGGLDFSNYYIA), and 80 to 100 (LAYGNFITIALNFIILAFIIF).

It belongs to the MscL family. Homopentamer.

It is found in the cell inner membrane. In terms of biological role, channel that opens in response to stretch forces in the membrane lipid bilayer. May participate in the regulation of osmotic pressure changes within the cell. The polypeptide is Large-conductance mechanosensitive channel (Janthinobacterium sp. (strain Marseille) (Minibacterium massiliensis)).